A 159-amino-acid chain; its full sequence is Dihydrofolate reductase (159 aa).

In terms of domain architecture, DHFR spans 2–157; that stretch reads TLSILVAHDL…IPHTFLHLIR (156 aa). A substrate-binding site is contributed by 6–8; the sequence is LVA. NADP(+) is bound by residues 7–8 and 15–20; these read VA and IGFENQ. Position 28 (D28) interacts with substrate. 44 to 47 provides a ligand contact to NADP(+); it reads GRKT. R58 is a binding site for substrate. NADP(+)-binding positions include 63–66 and 93–98; these read LTSD and FGGQTL. T112 lines the substrate pocket.

The protein belongs to the dihydrofolate reductase family.

It carries out the reaction (6S)-5,6,7,8-tetrahydrofolate + NADP(+) = 7,8-dihydrofolate + NADPH + H(+). It functions in the pathway cofactor biosynthesis; tetrahydrofolate biosynthesis; 5,6,7,8-tetrahydrofolate from 7,8-dihydrofolate: step 1/1. In terms of biological role, key enzyme in folate metabolism. Catalyzes an essential reaction for de novo glycine and purine synthesis, and for DNA precursor synthesis. This is Dihydrofolate reductase (folA) from Staphylococcus aureus (strain COL).